The chain runs to 428 residues: 5-methylthioadenosine/S-adenosylhomocysteine deaminase (428 aa).

Positions 65 and 67 each coordinate Zn(2+). Residues Glu-94, Arg-158, and His-184 each coordinate substrate. His-211 is a binding site for Zn(2+). Residues Glu-214 and Asp-299 each contribute to the substrate site. Asp-299 lines the Zn(2+) pocket.

Belongs to the metallo-dependent hydrolases superfamily. MTA/SAH deaminase family. Zn(2+) is required as a cofactor.

It catalyses the reaction S-adenosyl-L-homocysteine + H2O + H(+) = S-inosyl-L-homocysteine + NH4(+). The catalysed reaction is S-methyl-5'-thioadenosine + H2O + H(+) = S-methyl-5'-thioinosine + NH4(+). Catalyzes the deamination of 5-methylthioadenosine and S-adenosyl-L-homocysteine into 5-methylthioinosine and S-inosyl-L-homocysteine, respectively. Is also able to deaminate adenosine. In Moorella thermoacetica (strain ATCC 39073 / JCM 9320), this protein is 5-methylthioadenosine/S-adenosylhomocysteine deaminase.